The sequence spans 223 residues: Octanoyltransferase (223 aa).

The 186-residue stretch at 31 to 216 (GQIGDTLLLL…QIGEVFALEP (186 aa)) folds into the BPL/LPL catalytic domain. Substrate contacts are provided by residues 76–83 (RGGEVTYH), 145–147 (AIG), and 159–161 (GLA). The active-site Acyl-thioester intermediate is Cys-177.

This sequence belongs to the LipB family.

It is found in the cytoplasm. It catalyses the reaction octanoyl-[ACP] + L-lysyl-[protein] = N(6)-octanoyl-L-lysyl-[protein] + holo-[ACP] + H(+). It participates in protein modification; protein lipoylation via endogenous pathway; protein N(6)-(lipoyl)lysine from octanoyl-[acyl-carrier-protein]: step 1/2. Catalyzes the transfer of endogenously produced octanoic acid from octanoyl-acyl-carrier-protein onto the lipoyl domains of lipoate-dependent enzymes. Lipoyl-ACP can also act as a substrate although octanoyl-ACP is likely to be the physiological substrate. The chain is Octanoyltransferase from Chloroflexus aurantiacus (strain ATCC 29366 / DSM 635 / J-10-fl).